The sequence spans 329 residues: Phenylalanine--tRNA ligase alpha subunit (329 aa).

A Mg(2+)-binding site is contributed by E254.

It belongs to the class-II aminoacyl-tRNA synthetase family. Phe-tRNA synthetase alpha subunit type 1 subfamily. As to quaternary structure, tetramer of two alpha and two beta subunits. Requires Mg(2+) as cofactor.

The protein resides in the cytoplasm. The catalysed reaction is tRNA(Phe) + L-phenylalanine + ATP = L-phenylalanyl-tRNA(Phe) + AMP + diphosphate + H(+). This is Phenylalanine--tRNA ligase alpha subunit from Haemophilus influenzae (strain 86-028NP).